Reading from the N-terminus, the 36-residue chain is Photosystem I reaction center subunit VIII (36 aa).

Residues 8–28 (SIFVPLVGLVFPAIAMASLFL) form a helical membrane-spanning segment.

This sequence belongs to the PsaI family.

The protein localises to the plastid. It localises to the chloroplast thylakoid membrane. In terms of biological role, may help in the organization of the PsaL subunit. This chain is Photosystem I reaction center subunit VIII, found in Solanum bulbocastanum (Wild potato).